Consider the following 486-residue polypeptide: Putative protease Do-like 13 (486 aa).

A serine protease region spans residues 44 to 229 (KINTFSSKPN…IPAPVVKHFI (186 aa)). Residues His-83, Asp-114, and Ser-192 each act as charge relay system in the active site. The 94-residue stretch at 241–334 (FCSLNLSYQH…TILLKILREG (94 aa)) folds into the PDZ domain.

It belongs to the peptidase S1C family.

In terms of biological role, putative serine protease. The sequence is that of Putative protease Do-like 13 (DEGP13) from Arabidopsis thaliana (Mouse-ear cress).